The following is a 238-amino-acid chain: ATP synthase subunit a (238 aa).

A run of 7 helical transmembrane segments spans residues 35–55 (SNVI…TLAT), 61–81 (VPSG…SFVV), 94–114 (FLCA…VPGL), 128–148 (ALTV…AGYI), 151–171 (FMGP…ISHL), 190–210 (IVLV…MYFL), and 211–231 (FSLA…IYLK).

It belongs to the ATPase A chain family. As to quaternary structure, F-type ATPases have 2 components, CF(1) - the catalytic core - and CF(0) - the membrane proton channel. CF(1) has five subunits: alpha(3), beta(3), gamma(1), delta(1), epsilon(1). CF(0) has three main subunits: a(1), b(2) and c(9-12). The alpha and beta chains form an alternating ring which encloses part of the gamma chain. CF(1) is attached to CF(0) by a central stalk formed by the gamma and epsilon chains, while a peripheral stalk is formed by the delta and b chains.

It is found in the cell inner membrane. Its function is as follows. Key component of the proton channel; it plays a direct role in the translocation of protons across the membrane. This chain is ATP synthase subunit a, found in Solidesulfovibrio magneticus (strain ATCC 700980 / DSM 13731 / RS-1) (Desulfovibrio magneticus).